The chain runs to 506 residues: 2,3-bisphosphoglycerate-independent phosphoglycerate mutase (506 aa).

Positions 13 and 63 each coordinate Mn(2+). Ser63 (phosphoserine intermediate) is an active-site residue. Substrate-binding positions include His124, 153–154 (RD), Arg183, Arg189, 254–257 (RADR), and Lys330. Asp396, His400, Asp437, His438, and His456 together coordinate Mn(2+).

Belongs to the BPG-independent phosphoglycerate mutase family. As to quaternary structure, monomer. Requires Mn(2+) as cofactor.

The catalysed reaction is (2R)-2-phosphoglycerate = (2R)-3-phosphoglycerate. The protein operates within carbohydrate degradation; glycolysis; pyruvate from D-glyceraldehyde 3-phosphate: step 3/5. Catalyzes the interconversion of 2-phosphoglycerate and 3-phosphoglycerate. The sequence is that of 2,3-bisphosphoglycerate-independent phosphoglycerate mutase from Cereibacter sphaeroides (strain ATCC 17029 / ATH 2.4.9) (Rhodobacter sphaeroides).